The primary structure comprises 584 residues: Endogenous retrovirus group FC1 Env polyprotein (584 aa).

An N-terminal signal peptide occupies residues 1-22; sequence MARPSPLCLLLLLTLLTPIVPS. The Extracellular portion of the chain corresponds to 23–518; that stretch reads NSLLTEPPFR…GWWQSPLTTW (496 aa). N-linked (GlcNAc...) asparagine glycosylation is found at Asn69 and Asn247. Residues 251–254 carry the CXXC motif; that stretch reads CFLC. N-linked (GlcNAc...) asparagine glycans are attached at residues Asn272, Asn276, Asn308, Asn313, Asn322, Asn334, Asn342, and Asn346. The fusion peptide stretch occupies residues 384 to 404; sequence AVFPPLVIGVSLTSSLVASGL. Residues 449 to 465 carry the CKS-17 motif; it reads MQNRRALDLLTADKGGT. Cys466 and Cys473 are disulfide-bonded. Residues 466 to 474 carry the CX6CC motif; it reads CMFLGEECC. Residue Asn478 is glycosylated (N-linked (GlcNAc...) asparagine). Residues 519 to 539 form a helical membrane-spanning segment; it reads IIPFISPILIICLLLLIAPCV. Topologically, residues 540–584 are cytoplasmic; that stretch reads LKFIKNRISEVSRVTVNQMLLHPYSRLPTSEDHYDDALTQQEAAR.

This sequence belongs to the gamma type-C retroviral envelope protein family. HERV class-I F(c)1 env subfamily. As to quaternary structure, the surface (SU) and transmembrane (TM) proteins form a heterodimer. SU and TM are attached by noncovalent interactions or by a labile interchain disulfide bond. Specific enzymatic cleavages in vivo yield the mature SU and TM proteins. Post-translationally, the CXXC motif is highly conserved across a broad range of retroviral envelope proteins. It is thought to participate in the formation of a labile disulfide bond possibly with the CX6CC motif present in the transmembrane protein. As to expression, low expression in skin, testis and trachea.

The protein localises to the virion. It is found in the cell membrane. Functionally, retroviral envelope proteins mediate receptor recognition and membrane fusion during early infection. Endogenous envelope proteins may have kept, lost or modified their original function during evolution. This endogenous envelope protein has lost its original fusogenic properties. In terms of biological role, SU mediates receptor recognition. Its function is as follows. TM anchors the envelope heterodimer to the viral membrane through one transmembrane domain. The other hydrophobic domain, called fusion peptide, mediates fusion of the viral membrane with the target cell membrane. This is Endogenous retrovirus group FC1 Env polyprotein (ERVFC1) from Homo sapiens (Human).